A 137-amino-acid chain; its full sequence is Small ribosomal subunit protein bS6 (137 aa).

It belongs to the bacterial ribosomal protein bS6 family.

Functionally, binds together with bS18 to 16S ribosomal RNA. This Sulfurimonas denitrificans (strain ATCC 33889 / DSM 1251) (Thiomicrospira denitrificans (strain ATCC 33889 / DSM 1251)) protein is Small ribosomal subunit protein bS6.